Here is a 215-residue protein sequence, read N- to C-terminus: uncharacterized protein (215 aa).

It localises to the mitochondrion. This is an uncharacterized protein from Arabidopsis thaliana (Mouse-ear cress).